The sequence spans 359 residues: Phospho-N-acetylmuramoyl-pentapeptide-transferase (359 aa).

The Periplasmic portion of the chain corresponds to 1 to 25; sequence MLYQLALLLKDYWFAFNVLKYITFR. Residues 26–48 traverse the membrane as a helical segment; the sequence is SFTAVLIAFFLTLVLSPSFINRL. The Cytoplasmic segment spans residues 49 to 74; it reads RKIQRLFGGYVREYTPESHEVKKYTP. The muraymycin D2 site is built by Lys-70 and Thr-75. Residues 75–92 traverse the membrane as a helical segment; the sequence is TMGGIVILIVVTLSTLLL. At 93–98 the chain is on the periplasmic side; it reads MRWDIK. A helical transmembrane segment spans residues 99 to 120; the sequence is YTWVVLLSFLSFGTIGFWDDYV. Residues 121–130 are Cytoplasmic-facing; it reads KLKNKKGISI. The chain crosses the membrane as a helical span at residues 131–152; the sequence is KTKFLLQVLSASLISVLIYYWA. Over 153–172 the chain is Periplasmic; the sequence is DIDTILYFPFFKELYVDLGV. Residues 173 to 194 traverse the membrane as a helical segment; that stretch reads LYLPFAVFVIVGSANAVNLTDG. Muraymycin D2 is bound by residues Asn-190, Asp-193, and Asp-196. Topologically, residues 195–197 are cytoplasmic; sequence LDG. Residues 198-218 form a helical membrane-spanning segment; sequence LAIGPAMTTATALGVVAYAVG. The Periplasmic segment spans residues 219–233; that stretch reads HSKIAQYLNIPYVPY. A helical transmembrane segment spans residues 234 to 255; it reads AGELTVFCFALVGAGLGFLWFN. The Cytoplasmic segment spans residues 256–264; the sequence is SFPAQMFMG. 2 residues coordinate muraymycin D2: Gly-264 and Ser-268. Residues 265 to 280 traverse the membrane as a helical segment; it reads DVGSLSIGASLATVAL. Residues 281 to 284 lie on the Periplasmic side of the membrane; that stretch reads LTKS. The chain crosses the membrane as a helical span at residues 285 to 310; that stretch reads EFIFAVAAGVFVFETISVILQIIYFR. Muraymycin D2 is bound by residues Gln-305 and Ala-321. Topologically, residues 311-332 are cytoplasmic; it reads WTGGKRLFKRAPFHHHLELNGL. Residues 333 to 355 traverse the membrane as a helical segment; that stretch reads PEPKIVVRMWIISILLAIIAISM. The Periplasmic segment spans residues 356–359; the sequence is LKLR.

It belongs to the glycosyltransferase 4 family. MraY subfamily. As to quaternary structure, homodimer. Mg(2+) serves as cofactor. Mn(2+) is required as a cofactor.

Its subcellular location is the cell inner membrane. It catalyses the reaction UDP-N-acetyl-alpha-D-muramoyl-L-alanyl-gamma-D-glutamyl-meso-2,6-diaminopimeloyl-D-alanyl-D-alanine + di-trans,octa-cis-undecaprenyl phosphate = di-trans,octa-cis-undecaprenyl diphospho-N-acetyl-alpha-D-muramoyl-L-alanyl-D-glutamyl-meso-2,6-diaminopimeloyl-D-alanyl-D-alanine + UMP. The protein operates within cell wall biogenesis; peptidoglycan biosynthesis. Its activity is regulated as follows. Inhibited by natural nucleoside antibiotics including tunicamycin, capuramycin and muraymycin. Usually the cofactor magnesium is not required for antibiotic binding. Functionally, catalyzes the initial step of the lipid cycle reactions in the biosynthesis of the cell wall peptidoglycan: transfers peptidoglycan precursor phospho-MurNAc-pentapeptide from UDP-MurNAc-pentapeptide onto the lipid carrier undecaprenyl phosphate, yielding undecaprenyl-pyrophosphoryl-MurNAc-pentapeptide, known as lipid I. The protein is Phospho-N-acetylmuramoyl-pentapeptide-transferase of Aquifex aeolicus (strain VF5).